A 531-amino-acid chain; its full sequence is tRNA-2-methylthio-N(6)-dimethylallyladenosine synthase (531 aa).

Residues 1 to 26 (MNEKQRLEQTGQIKTESHPADRKSAL) form a disordered region. Residues 15–26 (TESHPADRKSAL) show a composition bias toward basic and acidic residues. Residues 80–198 (RKFYIRTYGC…LPYILHEAYM (119 aa)) enclose the MTTase N-terminal domain. Residues Cys-89, Cys-125, Cys-159, Cys-235, Cys-239, and Cys-242 each contribute to the [4Fe-4S] cluster site. The Radical SAM core domain occupies 221–451 (RKGKIKAWVN…NDLVQEIAAK (231 aa)). One can recognise a TRAM domain in the interval 454 to 517 (KQYEGQVVEV…TWTLTGELVN (64 aa)).

It belongs to the methylthiotransferase family. MiaB subfamily. Monomer. It depends on [4Fe-4S] cluster as a cofactor.

It localises to the cytoplasm. It catalyses the reaction N(6)-dimethylallyladenosine(37) in tRNA + (sulfur carrier)-SH + AH2 + 2 S-adenosyl-L-methionine = 2-methylsulfanyl-N(6)-dimethylallyladenosine(37) in tRNA + (sulfur carrier)-H + 5'-deoxyadenosine + L-methionine + A + S-adenosyl-L-homocysteine + 2 H(+). Its function is as follows. Catalyzes the methylthiolation of N6-(dimethylallyl)adenosine (i(6)A), leading to the formation of 2-methylthio-N6-(dimethylallyl)adenosine (ms(2)i(6)A) at position 37 in tRNAs that read codons beginning with uridine. In Geobacillus kaustophilus (strain HTA426), this protein is tRNA-2-methylthio-N(6)-dimethylallyladenosine synthase.